Here is a 189-residue protein sequence, read N- to C-terminus: Transmembrane protein 229b (189 aa).

Over 1–17 (MATTVTPEPLTALSRWY) the chain is Cytoplasmic. A helical transmembrane segment spans residues 18 to 38 (LYAIHGYFCEVMFTAAWEFVV). Residues 39 to 43 (NCNWK) lie on the Extracellular side of the membrane. The helical transmembrane segment at 44 to 64 (FPGVTSVWALFIYGTCILIVE) threads the bilayer. The Cytoplasmic segment spans residues 65 to 75 (RMYLCLKDRCN). A helical transmembrane segment spans residues 76–96 (VLLRCIIYTLWTYFWEFGTGF). The Extracellular segment spans residues 97 to 114 (LLRQFNACPWDYSEFKYN). The helical transmembrane segment at 115–135 (FMGLITAEYAVPWFCASFIVE) threads the bilayer. At 136–189 (RLVIRNTLRLRFDEVAESGQAEERLDRGGGGRGGRRGRGARAGATSANGYVKVD) the chain is on the cytoplasmic side. Residues 158-189 (ERLDRGGGGRGGRRGRGARAGATSANGYVKVD) are disordered.

Belongs to the TMEM229 family.

The protein localises to the membrane. The polypeptide is Transmembrane protein 229b (tmem229b) (Danio rerio (Zebrafish)).